A 178-amino-acid polypeptide reads, in one-letter code: Large ribosomal subunit protein uL6 (178 aa).

This sequence belongs to the universal ribosomal protein uL6 family. As to quaternary structure, part of the 50S ribosomal subunit.

Its function is as follows. This protein binds to the 23S rRNA, and is important in its secondary structure. It is located near the subunit interface in the base of the L7/L12 stalk, and near the tRNA binding site of the peptidyltransferase center. The chain is Large ribosomal subunit protein uL6 from Lactococcus lactis subsp. lactis (strain IL1403) (Streptococcus lactis).